A 90-amino-acid chain; its full sequence is MSLQEQFDQAASNVRNLKSLPSDNDLLELYALFKQASAGDADPANRPGLLDLKGKAKFDAWHKKAGLSKEDAQKAYIAKVESLIASLGLQ.

The ACB domain occupies 3–89; that stretch reads LQEQFDQAAS…VESLIASLGL (87 aa). An acyl-CoA-binding positions include Arg15, 30–34, Lys53, Lys57, and Tyr76; that span reads YALFK.

The protein belongs to the ACBP family.

Binds medium- and long-chain acyl-CoA esters with very high affinity and may function as an intracellular carrier of acyl-CoA esters. The protein is Acyl-CoA-binding protein homolog of Manduca sexta (Tobacco hawkmoth).